Reading from the N-terminus, the 179-residue chain is Replication restart protein DnaT (179 aa).

Polar residues predominate over residues 151–168 (SRSSNGGMPQRDINSVSE). Residues 151–179 (SRSSNGGMPQRDINSVSEPDNHIPPGFRG) form a disordered region.

The protein belongs to the DnaT family. In terms of assembly, homooligomerizes. Interacts with PriB. Component of the replication restart primosome. Primosome assembly occurs via a 'hand-off' mechanism. PriA binds to replication forks, subsequently PriB then DnaT bind; DnaT then displaces ssDNA to generate the helicase loading substrate.

Functionally, involved in the restart of stalled replication forks, which reloads the replicative helicase on sites other than the origin of replication. Can function in multiple replication restart pathways. Displaces ssDNA from a PriB-ssDNA complex. Probably forms a spiral filament on ssDNA. In Salmonella heidelberg (strain SL476), this protein is Replication restart protein DnaT.